Here is a 517-residue protein sequence, read N- to C-terminus: ATP synthase subunit alpha (517 aa).

175-182 (GDRQTGKT) is a binding site for ATP.

This sequence belongs to the ATPase alpha/beta chains family. F-type ATPases have 2 components, CF(1) - the catalytic core - and CF(0) - the membrane proton channel. CF(1) has five subunits: alpha(3), beta(3), gamma(1), delta(1), epsilon(1). CF(0) has three main subunits: a(1), b(2) and c(9-12). The alpha and beta chains form an alternating ring which encloses part of the gamma chain. CF(1) is attached to CF(0) by a central stalk formed by the gamma and epsilon chains, while a peripheral stalk is formed by the delta and b chains.

It localises to the cell membrane. The catalysed reaction is ATP + H2O + 4 H(+)(in) = ADP + phosphate + 5 H(+)(out). Functionally, produces ATP from ADP in the presence of a proton gradient across the membrane. The alpha chain is a regulatory subunit. The polypeptide is ATP synthase subunit alpha (Herpetosiphon aurantiacus (strain ATCC 23779 / DSM 785 / 114-95)).